Consider the following 492-residue polypeptide: Phosphatidylinositol 4-kinase type 2-beta (492 aa).

A compositionally biased stretch (basic and acidic residues) spans 1-11 (MEPKQTADARD). The interval 1–98 (MEPKQTADAR…SDRENMSGGH (98 aa)) is disordered. Positions 127 to 462 (GVFPERISQG…VQMPRVVVER (336 aa)) constitute a PI3K/PI4K catalytic domain. A G-loop region spans residues 133-139 (ISQGSSG). ATP is bound by residues Ser-140 and Lys-155. The interval 160–162 (EPY) is important for substrate binding. Positions 168-181 (KWTKYFHKICCPCC) are important for interaction with membranes. ATP-binding positions include 264 to 267 (QLFV) and 278 to 279 (RK). The segment at 271-279 (KEADYWLRK) is important for interaction with membranes. A catalytic loop region spans residues 308-316 (RNTDRGNDN). The segment at 353–373 (AIDNGLAFPFKHPDEWRAYPF) is activation loop. Asp-355 serves as a coordination point for ATP. The tract at residues 368 to 377 (WRAYPFHWAW) is important for interaction with membranes.

Belongs to the PI3/PI4-kinase family. Type II PI4K subfamily.

It is found in the cytoplasm. It localises to the cytosol. The protein resides in the golgi apparatus membrane. The protein localises to the endoplasmic reticulum membrane. Its subcellular location is the cell membrane. It is found in the early endosome membrane. It catalyses the reaction a 1,2-diacyl-sn-glycero-3-phospho-(1D-myo-inositol) + ATP = a 1,2-diacyl-sn-glycero-3-phospho-(1D-myo-inositol 4-phosphate) + ADP + H(+). Its function is as follows. Contributes to the overall PI4-kinase activity of the cell. This contribution may be especially significant in plasma membrane, endosomal and Golgi compartments. The phosphorylation of phosphatidylinositol (PI) to PI4P is the first committed step in the generation of phosphatidylinositol 4,5-bisphosphate (PIP2), a precursor of the second messenger inositol 1,4,5-trisphosphate (InsP3). The polypeptide is Phosphatidylinositol 4-kinase type 2-beta (pi4k2b) (Xenopus tropicalis (Western clawed frog)).